We begin with the raw amino-acid sequence, 404 residues long: Imidazolonepropionase (404 aa).

The Fe(3+) site is built by His70 and His72. Residues His70 and His72 each coordinate Zn(2+). Residues Arg79, Tyr142, and His174 each contribute to the 4-imidazolone-5-propanoate site. Tyr142 contributes to the N-formimidoyl-L-glutamate binding site. His234 contributes to the Fe(3+) binding site. His234 provides a ligand contact to Zn(2+). Glu237 contributes to the 4-imidazolone-5-propanoate binding site. Asp308 contacts Fe(3+). Residue Asp308 participates in Zn(2+) binding.

Belongs to the metallo-dependent hydrolases superfamily. HutI family. Zn(2+) serves as cofactor. Requires Fe(3+) as cofactor.

It is found in the cytoplasm. The catalysed reaction is 4-imidazolone-5-propanoate + H2O = N-formimidoyl-L-glutamate. It functions in the pathway amino-acid degradation; L-histidine degradation into L-glutamate; N-formimidoyl-L-glutamate from L-histidine: step 3/3. Its function is as follows. Catalyzes the hydrolytic cleavage of the carbon-nitrogen bond in imidazolone-5-propanoate to yield N-formimidoyl-L-glutamate. It is the third step in the universal histidine degradation pathway. This is Imidazolonepropionase from Thermoplasma volcanium (strain ATCC 51530 / DSM 4299 / JCM 9571 / NBRC 15438 / GSS1).